Consider the following 359-residue polypeptide: DNA-directed RNA polymerase RPB3-11 homolog (359 aa).

The protein in the N-terminal section; belongs to the archaeal RpoD/eukaryotic RPB3 RNA polymerase subunit family. In the C-terminal section; belongs to the archaeal RpoL/eukaryotic RPB11/RPC19 RNA polymerase subunit family. In terms of assembly, part of the viral DNA-directed RNA polymerase that consists of 8 polII-like subunits (RPB1, RPB2, RPB3, RPB5, RPB6, RPB7, RPB9, RPB10), a capping enzyme and a termination factor.

The protein localises to the host cytoplasm. The protein resides in the virion. Its function is as follows. Component of the DNA-directed RNA polymerase (RNAP) that catalyzes the transcription in the cytoplasm of viral DNA into RNA using the four ribonucleoside triphosphates as substrates. The chain is DNA-directed RNA polymerase RPB3-11 homolog from Ornithodoros (relapsing fever ticks).